A 393-amino-acid chain; its full sequence is MTTPGEDHAGSFYLPRLEYSTLPMAVDRGVGWKTLRDAGPVVFMNGWYYLTRREDVLAALRNPKVFSSRKALQPPGNPLPVVPLAFDPPEHTRYRRILQPYFSPAALSKALPSLRRHTVAMIDAIAGRGECEAMADLANLFPFQLFLVLYGLPLEDRDRLIGWKDAVIAMSDRPHPTEADVAAARELLEYLTAMVAERRRNPGPDVLSQVQIGEDPLSEIEVLGLSHLLILAGLDTVTAAVGFSLLELARRPQLRAMLRDNPKQIRVFIEEIVRLEPSAPVAPRVTTEPVTVGGMTLPAGSPVRLCMAAVNRDGSDAMSTDELVMDGKVHRHWGFGGGPHRCLGSHLARLELTLLVGEWLNQIPDFELAPDYAPEIRFPSKSFALKNLPLRWS.

Residue cysteine 342 participates in heme binding.

It belongs to the cytochrome P450 family. The cofactor is heme.

This Mycobacterium bovis (strain ATCC BAA-935 / AF2122/97) protein is Putative cytochrome P450 143 (cyp143).